Reading from the N-terminus, the 658-residue chain is Carnitine O-palmitoyltransferase 2, mitochondrial (658 aa).

A mitochondrion-targeting transit peptide spans 1-25 (MVARLLLRSWSRGLAVGPGAPCRPL). At 26 to 178 (STGFEPSQYL…DLLEPEVFHL (153 aa)) the chain is on the mitochondrial matrix side. K69 is modified (N6-succinyllysine). K79 is subject to N6-acetyllysine. K85 is modified (N6-succinyllysine). An intramembrane region (note=Mitochondrial inner membrane) is located at residues 179–208 (NPAKSDTDTFKRFIRFVPSFLSWYGAYLVN). The Mitochondrial matrix portion of the chain corresponds to 209–658 (AYPLDMSQYY…DALEGKMIKT (450 aa)). Residue K239 is modified to N6-acetyllysine; alternate. Position 239 is an N6-succinyllysine; alternate (K239). The active-site Proton acceptor is the H372. An N6-acetyllysine; alternate modification is found at K418. K418 carries the N6-succinyllysine; alternate modification. N6-succinyllysine is present on residues K424 and K439. 452 to 464 (GREFLKKQKLSPD) provides a ligand contact to CoA. 3 residues coordinate (R)-carnitine: Y486, S488, and T499. K510 carries the post-translational modification N6-acetyllysine; alternate. K510 bears the N6-succinyllysine; alternate mark.

The protein belongs to the carnitine/choline acetyltransferase family.

It is found in the mitochondrion inner membrane. It carries out the reaction (R)-carnitine + hexadecanoyl-CoA = O-hexadecanoyl-(R)-carnitine + CoA. It catalyses the reaction octanoyl-CoA + (R)-carnitine = O-octanoyl-(R)-carnitine + CoA. The catalysed reaction is decanoyl-CoA + (R)-carnitine = O-decanoyl-(R)-carnitine + CoA. The enzyme catalyses dodecanoyl-CoA + (R)-carnitine = O-dodecanoyl-R-carnitine + CoA. It carries out the reaction tetradecanoyl-CoA + (R)-carnitine = O-tetradecanoyl-(R)-carnitine + CoA. It catalyses the reaction (R)-carnitine + octadecanoyl-CoA = O-octadecanoyl-(R)-carnitine + CoA. The catalysed reaction is eicosanoyl-CoA + (R)-carnitine = O-eicosanoyl-(R)-carnitine + CoA. The enzyme catalyses (9Z)-tetradecenoyl-CoA + (R)-carnitine = O-(9Z)-tetradecenoyl-(R)-carnitine + CoA. It carries out the reaction (5Z)-tetradecenoyl-CoA + (R)-carnitine = O-(5Z)-tetradecenoyl-(R)-carnitine + CoA. It catalyses the reaction (R)-carnitine + (9Z)-octadecenoyl-CoA = O-(9Z)-octadecenoyl-(R)-carnitine + CoA. The catalysed reaction is 4,8-dimethylnonanoyl-CoA + (R)-carnitine = O-4,8-dimethylnonanoyl-(R)-carnitine + CoA. The protein operates within lipid metabolism; fatty acid beta-oxidation. Its function is as follows. Involved in the intramitochondrial synthesis of acylcarnitines from accumulated acyl-CoA metabolites. Reconverts acylcarnitines back into the respective acyl-CoA esters that can then undergo beta-oxidation, an essential step for the mitochondrial uptake of long-chain fatty acids and their subsequent beta-oxidation in the mitochondrion. Active with medium (C8-C12) and long-chain (C14-C18) acyl-CoA esters. The protein is Carnitine O-palmitoyltransferase 2, mitochondrial (CPT2) of Bos taurus (Bovine).